A 130-amino-acid polypeptide reads, in one-letter code: Large-conductance mechanosensitive channel (130 aa).

The Cytoplasmic segment spans residues 1–14 (MWNEFKAFAMRGNI). The chain crosses the membrane as a helical span at residues 15–43 (VDLAIGVVIGGAFGKIVTSLVNDIIMPLV). Residues 44 to 65 (GLLLGGLDFSGLSFTFGDAVVK) lie on the Extracellular side of the membrane. A helical membrane pass occupies residues 66-85 (YGSFIQTIVNFLIISFSIFI). Topologically, residues 86–130 (VIRTLNGLRRKKEAEEEAAEEAVDAQEELLKEIRDLLKQQAKSPE) are cytoplasmic.

The protein belongs to the MscL family. In terms of assembly, homopentamer.

It localises to the cell membrane. In terms of biological role, channel that opens in response to stretch forces in the membrane lipid bilayer. Forms a nonselective ion channel with a conductance of about 4 nanosiemens. May participate in the regulation of osmotic pressure changes within the cell. This is Large-conductance mechanosensitive channel from Bacillus subtilis (strain 168).